A 967-amino-acid chain; its full sequence is Siderophore exporter MmpL4 (967 aa).

A run of 11 helical transmembrane segments spans residues 26-46, 210-230, 242-262, 303-323, 333-353, 384-404, 769-789, 793-813, 821-841, 875-895, and 913-934; these read AFAV…TVFV, VIFI…LLLI, VVAV…VSLL, AHVI…LSFA, IPCA…GPAV, WPLP…LALP, WDLL…MLII, FIAA…SFGL, ILAI…LLAV, VVTN…VSDL, and TLIV…WFWW. The segment at 943–967 is disordered; that stretch reads ARTPTVPSETQPAGRPLAMSSDRLG.

It belongs to the resistance-nodulation-cell division (RND) (TC 2.A.6) family. MmpL subfamily. As to quaternary structure, interacts with MmpS4.

The protein resides in the cell inner membrane. Part of an export system, which is required for biosynthesis and secretion of siderophores. The protein is Siderophore exporter MmpL4 (mmpL4) of Mycobacterium tuberculosis (strain CDC 1551 / Oshkosh).